Reading from the N-terminus, the 286-residue chain is Polyamine aminopropyltransferase (286 aa).

The PABS domain maps to 5-238 (TMWHETLHDQ…GIMTFAWATD (234 aa)). Position 33 (Q33) interacts with S-methyl-5'-thioadenosine. Spermidine is bound by residues H64 and D88. Residues E108 and 140 to 141 (DG) each bind S-methyl-5'-thioadenosine. D158 serves as the catalytic Proton acceptor. 158-161 (DCTD) lines the spermidine pocket. P165 is a binding site for S-methyl-5'-thioadenosine.

The protein belongs to the spermidine/spermine synthase family. Homodimer or homotetramer.

The protein localises to the cytoplasm. The enzyme catalyses S-adenosyl 3-(methylsulfanyl)propylamine + putrescine = S-methyl-5'-thioadenosine + spermidine + H(+). The protein operates within amine and polyamine biosynthesis; spermidine biosynthesis; spermidine from putrescine: step 1/1. Functionally, catalyzes the irreversible transfer of a propylamine group from the amino donor S-adenosylmethioninamine (decarboxy-AdoMet) to putrescine (1,4-diaminobutane) to yield spermidine. This chain is Polyamine aminopropyltransferase, found in Salmonella schwarzengrund (strain CVM19633).